We begin with the raw amino-acid sequence, 579 residues long: Putative laccase-9 (579 aa).

The first 27 residues, 1 to 27 (MGTAKLPALLWLLAGVVLALAVNPAHG), serve as a signal peptide directing secretion. Plastocyanin-like domains follow at residues 36–152 (FITE…PKRG) and 162–319 (KEIP…YTDS). Asn-41 and Asn-82 each carry an N-linked (GlcNAc...) asparagine glycan. Cu cation contacts are provided by His-86 and His-88. Residue Asn-114 is glycosylated (N-linked (GlcNAc...) asparagine). The Cu cation site is built by His-131 and His-133. N-linked (GlcNAc...) asparagine glycans are attached at residues Asn-307, Asn-405, and Asn-446. Residues 436–563 (PTAFVDPPVN…DTVFIVKDGK (128 aa)) form the Plastocyanin-like 3 domain. Cu cation is bound by residues His-480, His-483, and His-485. N-linked (GlcNAc...) asparagine glycosylation occurs at Asn-496. Residues His-542, Cys-543, His-544, His-548, and Met-553 each coordinate Cu cation.

Belongs to the multicopper oxidase family. It depends on Cu cation as a cofactor.

Its subcellular location is the secreted. It is found in the extracellular space. The protein resides in the apoplast. The catalysed reaction is 4 hydroquinone + O2 = 4 benzosemiquinone + 2 H2O. Its function is as follows. Lignin degradation and detoxification of lignin-derived products. The chain is Putative laccase-9 (LAC9) from Oryza sativa subsp. japonica (Rice).